Consider the following 103-residue polypeptide: Large ribosomal subunit protein bL21 (103 aa).

Belongs to the bacterial ribosomal protein bL21 family. Part of the 50S ribosomal subunit. Contacts protein L20.

In terms of biological role, this protein binds to 23S rRNA in the presence of protein L20. In Clostridioides difficile (strain 630) (Peptoclostridium difficile), this protein is Large ribosomal subunit protein bL21.